A 24-amino-acid chain; its full sequence is Brevinin-1Bb (24 aa).

Cysteines 18 and 24 form a disulfide.

As to expression, expressed by the skin glands.

It localises to the secreted. In terms of biological role, antibacterial activity against Gram-positive bacterium S.aureus and Gram-negative bacterium E.coli. Has activity against C.albicans. This Lithobates berlandieri (Rio Grande leopard frog) protein is Brevinin-1Bb.